Consider the following 144-residue polypeptide: uncharacterized protein (144 aa).

The N-terminal stretch at 1–23 is a signal peptide; the sequence is MRKILLFATVIGFLIMVSGTLSY.

This is an uncharacterized protein from Archaeoglobus fulgidus (strain ATCC 49558 / DSM 4304 / JCM 9628 / NBRC 100126 / VC-16).